The following is an 838-amino-acid chain: Periplasmic nitrate reductase (838 aa).

Positions 1–29 form a signal peptide, tat-type signal; it reads MDMSRRTLLKAQAAAAAAAVAGIDLPAEA. The region spanning 40-96 is the 4Fe-4S Mo/W bis-MGD-type domain; it reads LKWSKAPCRFCGTGCGVMVGVKDGRVVATHGDMQAEVNRGLNCVKGYFLSKIMYGAD. Cysteine 47, cysteine 50, cysteine 54, and cysteine 82 together coordinate [4Fe-4S] cluster. Mo-bis(molybdopterin guanine dinucleotide) is bound by residues lysine 84, glutamine 151, asparagine 176, cysteine 180, 213–220, 244–248, 263–265, methionine 374, glutamine 378, asparagine 484, 510–511, lysine 533, aspartate 560, and 720–729; these read WGSNMAEM, STYEH, GTD, SD, and TGRVLEHWHS. Position 796 (phenylalanine 796) interacts with substrate. Residues asparagine 804 and lysine 821 each contribute to the Mo-bis(molybdopterin guanine dinucleotide) site.

It belongs to the prokaryotic molybdopterin-containing oxidoreductase family. NasA/NapA/NarB subfamily. As to quaternary structure, component of the periplasmic nitrate reductase NapAB complex composed of NapA and NapB. The cofactor is [4Fe-4S] cluster. Mo-bis(molybdopterin guanine dinucleotide) serves as cofactor. In terms of processing, predicted to be exported by the Tat system. The position of the signal peptide cleavage has not been experimentally proven.

Its subcellular location is the periplasm. It catalyses the reaction 2 Fe(II)-[cytochrome] + nitrate + 2 H(+) = 2 Fe(III)-[cytochrome] + nitrite + H2O. Functionally, catalytic subunit of the periplasmic nitrate reductase complex NapAB. Receives electrons from NapB and catalyzes the reduction of nitrate to nitrite. The sequence is that of Periplasmic nitrate reductase from Methylobacterium sp. (strain 4-46).